The chain runs to 290 residues: ATP synthase gamma chain (290 aa).

It belongs to the ATPase gamma chain family. In terms of assembly, F-type ATPases have 2 components, CF(1) - the catalytic core - and CF(0) - the membrane proton channel. CF(1) has five subunits: alpha(3), beta(3), gamma(1), delta(1), epsilon(1). CF(0) has three main subunits: a, b and c.

It is found in the cell membrane. Produces ATP from ADP in the presence of a proton gradient across the membrane. The gamma chain is believed to be important in regulating ATPase activity and the flow of protons through the CF(0) complex. The chain is ATP synthase gamma chain from Rubrobacter xylanophilus (strain DSM 9941 / JCM 11954 / NBRC 16129 / PRD-1).